Reading from the N-terminus, the 487-residue chain is Chromosomal replication initiator protein DnaA (487 aa).

The tract at residues 1-92 (MTIKGGVVSQ…SELWTANDAT (92 aa)) is domain I, interacts with DnaA modulators. The interval 92–144 (TGRRLDLKSRLEFESVGGAGYEAKAEPIEIVLPVSSDVPALAPTNGSKPSPVQ) is domain II. The interval 145–367 (GLQERFTFDT…GALNTLSARA (223 aa)) is domain III, AAA+ region. 4 residues coordinate ATP: glycine 189, glycine 191, lysine 192, and threonine 193. The interval 368-487 (GEGVSRLTLE…LETITRKLRG (120 aa)) is domain IV, binds dsDNA.

This sequence belongs to the DnaA family. As to quaternary structure, oligomerizes as a right-handed, spiral filament on DNA at oriC.

It localises to the cytoplasm. Its function is as follows. Plays an essential role in the initiation and regulation of chromosomal replication. ATP-DnaA binds to the origin of replication (oriC) to initiate formation of the DNA replication initiation complex once per cell cycle. Binds the DnaA box (a 9 base pair repeat at the origin) and separates the double-stranded (ds)DNA. Forms a right-handed helical filament on oriC DNA; dsDNA binds to the exterior of the filament while single-stranded (ss)DNA is stabiized in the filament's interior. The ATP-DnaA-oriC complex binds and stabilizes one strand of the AT-rich DNA unwinding element (DUE), permitting loading of DNA polymerase. After initiation quickly degrades to an ADP-DnaA complex that is not apt for DNA replication. Binds acidic phospholipids. This Caulobacter sp. (strain K31) protein is Chromosomal replication initiator protein DnaA.